Here is an 858-residue protein sequence, read N- to C-terminus: DNA mismatch repair protein MutS (858 aa).

Position 602–609 (602–609 (GPNMSGKS)) interacts with ATP.

Belongs to the DNA mismatch repair MutS family.

This protein is involved in the repair of mismatches in DNA. It is possible that it carries out the mismatch recognition step. This protein has a weak ATPase activity. Overexpression of mutSL partially suppresses the high spontaneous mutation frequency of a ytkD/mutM/mutY triple disruption which lacks the system required to prevent damage by oxidized guanine (8-oxo-dGTP). This suggests that MutSL also functions to repair mismatches due to oxidative stress in both growing and stationary phase cells. This Bacillus subtilis (strain 168) protein is DNA mismatch repair protein MutS.